The chain runs to 200 residues: Holliday junction branch migration complex subunit RuvA (200 aa).

The segment at 1-63 is domain I; the sequence is MIALVQGRVA…EDSLTLFGFA (63 aa). The segment at 64-138 is domain II; that stretch reads DADERDVFEL…DRLGPAQGAA (75 aa). The flexible linker stretch occupies residues 138-142; sequence APAAP. Residues 143 to 200 are domain III; sequence VAVDDGADVVDALVGLGWPVRQAQDAVRGVLEDADGTAPDAAGLLRAALRSLAGDARG.

The protein belongs to the RuvA family. Homotetramer. Forms an RuvA(8)-RuvB(12)-Holliday junction (HJ) complex. HJ DNA is sandwiched between 2 RuvA tetramers; dsDNA enters through RuvA and exits via RuvB. An RuvB hexamer assembles on each DNA strand where it exits the tetramer. Each RuvB hexamer is contacted by two RuvA subunits (via domain III) on 2 adjacent RuvB subunits; this complex drives branch migration. In the full resolvosome a probable DNA-RuvA(4)-RuvB(12)-RuvC(2) complex forms which resolves the HJ.

The protein resides in the cytoplasm. The RuvA-RuvB-RuvC complex processes Holliday junction (HJ) DNA during genetic recombination and DNA repair, while the RuvA-RuvB complex plays an important role in the rescue of blocked DNA replication forks via replication fork reversal (RFR). RuvA specifically binds to HJ cruciform DNA, conferring on it an open structure. The RuvB hexamer acts as an ATP-dependent pump, pulling dsDNA into and through the RuvAB complex. HJ branch migration allows RuvC to scan DNA until it finds its consensus sequence, where it cleaves and resolves the cruciform DNA. The protein is Holliday junction branch migration complex subunit RuvA of Beutenbergia cavernae (strain ATCC BAA-8 / DSM 12333 / CCUG 43141 / JCM 11478 / NBRC 16432 / NCIMB 13614 / HKI 0122).